The primary structure comprises 265 residues: Ribosomal RNA small subunit methyltransferase A (265 aa).

Residues histidine 13, leucine 15, glycine 40, glutamate 62, aspartate 87, and asparagine 106 each contribute to the S-adenosyl-L-methionine site.

Belongs to the class I-like SAM-binding methyltransferase superfamily. rRNA adenine N(6)-methyltransferase family. RsmA subfamily.

Its subcellular location is the cytoplasm. The catalysed reaction is adenosine(1518)/adenosine(1519) in 16S rRNA + 4 S-adenosyl-L-methionine = N(6)-dimethyladenosine(1518)/N(6)-dimethyladenosine(1519) in 16S rRNA + 4 S-adenosyl-L-homocysteine + 4 H(+). In terms of biological role, specifically dimethylates two adjacent adenosines (A1518 and A1519) in the loop of a conserved hairpin near the 3'-end of 16S rRNA in the 30S particle. May play a critical role in biogenesis of 30S subunits. The polypeptide is Ribosomal RNA small subunit methyltransferase A (Persephonella marina (strain DSM 14350 / EX-H1)).